A 633-amino-acid polypeptide reads, in one-letter code: Extracellular metalloproteinase 3 (633 aa).

Positions 1–18 (MHGLLLAGLLALPMNVLA) are cleaved as a signal peptide. Positions 19–246 (YPAEQHASNV…VHNVVDYVAS (228 aa)) are excised as a propeptide. N-linked (GlcNAc...) asparagine glycosylation occurs at Asn-410. His-429 is a binding site for Zn(2+). Glu-430 is an active-site residue. His-433 contributes to the Zn(2+) binding site. Residues Asn-480 and Asn-622 are each glycosylated (N-linked (GlcNAc...) asparagine).

It belongs to the peptidase M36 family. Zn(2+) is required as a cofactor.

Its subcellular location is the secreted. Functionally, secreted metalloproteinase probably acting as a virulence factor. The chain is Extracellular metalloproteinase 3 (MEP3) from Trichophyton rubrum (Athlete's foot fungus).